Here is a 682-residue protein sequence, read N- to C-terminus: Potassium-transporting ATPase ATP-binding subunit (682 aa).

Helical transmembrane passes span 34–54 (PVMF…VAMA), 62–82 (AGFT…ANVA), 219–239 (IALT…TATL), and 254–274 (VLVA…LSAI). Asp-307 (4-aspartylphosphate intermediate) is an active-site residue. Residues Asp-344, Glu-348, 377–384 (FTAQTRMS), and Lys-395 each bind ATP. Mg(2+) is bound by residues Asp-518 and Asp-522. 3 consecutive transmembrane segments (helical) span residues 588 to 608 (FAII…LNVM), 616 to 636 (AILS…PLAL), and 662 to 682 (LVVP…FGLV).

This sequence belongs to the cation transport ATPase (P-type) (TC 3.A.3) family. Type IA subfamily. As to quaternary structure, the system is composed of three essential subunits: KdpA, KdpB and KdpC.

Its subcellular location is the cell inner membrane. It carries out the reaction K(+)(out) + ATP + H2O = K(+)(in) + ADP + phosphate + H(+). Functionally, part of the high-affinity ATP-driven potassium transport (or Kdp) system, which catalyzes the hydrolysis of ATP coupled with the electrogenic transport of potassium into the cytoplasm. This subunit is responsible for energy coupling to the transport system and for the release of the potassium ions to the cytoplasm. This Enterobacter sp. (strain 638) protein is Potassium-transporting ATPase ATP-binding subunit.